The primary structure comprises 1245 residues: MNRGFFNMLGRRPFPAPTAMWRPRRRRQAAPMPARNGLASQIQQLTTAVSALVIGQATRPQPPRPRPPPRQKKQAPKQPPKPKKPKTQEKKKKQPAKPKPGKRQRMALKLEADRLFDVKNEDGDVIGHALAMEGKVMKPLHVKGTIDHPVLSKLKFTKSSAYDMEFAQLPVNMRSEAFTYTSEHPEGFYNWHHGAVQYSGGRFTIPRGVGGRGDSGRPIMDNSGRVVAIVLGGADEGTRTALSVVTWNSKGKTIKTTPEGTEEWSAAPLVTAMCLLGNVSFPCDRPPTCYTREPSRALDILEENVNHEAYDTLLNAILRCGSSGRSKRSVIDDFTLTSPYLGTCSYCHHTVPCFSPVKIEQVWDEADDNTIRIQTSAQFGYDQSGAASANKYRYMSLKQDHTVKEGTMDDIKISTSGPCRRLSYKGYFLLAKCPPGDSVTVSIVSSNSATSCTLARKIKPKFVGREKYDLPPVHGKKIPCTVYDRLKETTAGYITMHRPRPHAYTSYLEESSGKVYAKPPSGKNITYECKCGDYKTGTVSTRTEITGCTAIKQCVAYKSDQTKWVFNSPDLIRHDDHTAQGKLHLPFKLIPSTCMVPVAHAPNVIHGFKHISLQLDTDHLTLLTTRRLGANPEPTTEWIVGKTVRNFTVDRDGLEYIWGNHEPVRVYAQESAPGDPHGWPHEIVQHYYHRHPVYTILAVASATVAMMIGVTVAVLCACKARRECLTPYALAPNAVIPTSLALLCCVRSANAETFTETMSYLWSNSQPFFWVQLCIPLAAFIVLMRCCSCCLPFLVVAGAYLAKVDAYEHATTVPNVPQIPYKALVERAGYAPLNLEITVMSSEVLPSTNQEYITCKFTTVVPSPKIKCCGSLECQPAAHADYTCKVFGGVYPFMWGGAQCFCDSENSQMSEAYVELSADCASDHAQAIKVHTAAMKVGLRIVYGNTTSFLDVYVNGVTPGTSKDLKVIAGPISASFTPFDHKVVIHRGLVYNYDFPEYGAMKPGAFGDIQATSLTSKDLIASTDIRLLKPSAKNVHVPYTQASSGFEMWKNNSGRPLQETAPFGCKIAVNPLRAVDCSYGNIPISIDIPNAAFIRTSDAPLVSTVKCEVSECTYSADFGGMATLQYVSDREGQCPVHSHSSTATLQESTVHVLEKGAVTVHFSTASPQANFIVSLCGKKTTCNAECKPPADHIVSTPHKNDQEFQAAISKTSWSWLFALFGGASSLLIIGLMIFACSMMLTSTRR.

Residues 1–106 form a disordered region; it reads MNRGFFNMLG…KPKPGKRQRM (106 aa). Residues 37-70 are host transcription inhibition; it reads GLASQIQQLTTAVSALVIGQATRPQPPRPRPPPR. Residues 38-49 show a composition bias toward polar residues; that stretch reads LASQIQQLTTAV. The Nuclear localization signal signature appears at 63 to 100; it reads PRPRPPPRQKKQAPKQPPKPKKPKTQEKKKKQPAKPKP. Basic residues predominate over residues 67 to 106; that stretch reads PPPRQKKQAPKQPPKPKKPKTQEKKKKQPAKPKPGKRQRM. Residues 86-115 are binding to the viral RNA; the sequence is KTQEKKKKQPAKPKPGKRQRMALKLEADRL. The segment at 100 to 114 is ribosome-binding; the sequence is PGKRQRMALKLEADR. A Peptidase S3 domain is found at 114-264; sequence RLFDVKNEDG…KTTPEGTEEW (151 aa). Residue His141 is the Charge relay system of the active site. The short motif at 146 to 156 is the Nuclear export signal element; that stretch reads IDHPVLSKLKF. Positions 157-162 are interaction with spike glycoprotein E2; it reads TKSSAY. Residue Asp163 is the Charge relay system of the active site. The dimerization of the capsid protein stretch occupies residues 185–195; the sequence is PEGFYNWHHGA. Catalysis depends on Ser215, which acts as the Charge relay system. The interval 221–225 is dimerization of the capsid protein; the sequence is DNSGR. The interval 249-253 is interaction with spike glycoprotein E2; it reads SKGKT. A functions as an uncleaved signal peptide for the precursor of protein E3/E2 region spans residues 265 to 279; sequence SAAPLVTAMCLLGNV. The N-linked (GlcNAc...) asparagine; by host glycan is linked to Asn278. 4 disulfide bridges follow: Cys283–Cys289, Cys480–Cys594, Cys529–Cys554, and Cys531–Cys548. Topologically, residues 329 to 690 are extracellular; that stretch reads SVIDDFTLTS…HEIVQHYYHR (362 aa). The N-linked (GlcNAc...) asparagine; by host glycan is linked to Asn524. An N-linked (GlcNAc...) asparagine; by host glycan is attached at Asn646. Residues 682–730 are a coiled coil; the sequence is EIVQHYYHRHPVYTILAVASATVAMMIGVTVAVLCACKARRECLTPYAL. Residues 691–718 form a helical membrane-spanning segment; that stretch reads HPVYTILAVASATVAMMIGVTVAVLCAC. Positions 719–723 are interaction with the capsid protein; that stretch reads KARRE. The Cytoplasmic portion of the chain corresponds to 719–751; it reads KARRECLTPYALAPNAVIPTSLALLCCVRSANA. Residues Cys724, Cys744, and Cys745 are each lipidated (S-palmitoyl cysteine; by host). A disulfide bridge connects residues Cys724 and Cys745. Over 752-763 the chain is Extracellular; that stretch reads ETFTETMSYLWS. A helical membrane pass occupies residues 764–784; sequence NSQPFFWVQLCIPLAAFIVLM. A topological domain (cytoplasmic) is located at residue Arg785. Residues 786 to 806 traverse the membrane as a helical segment; the sequence is CCSCCLPFLVVAGAYLAKVDA. The Extracellular portion of the chain corresponds to 807–1214; the sequence is YEHATTVPNV…QAAISKTSWS (408 aa). Disulfide bonds link Cys855–Cys920, Cys868–Cys900, Cys869–Cys902, and Cys874–Cys884. An E1 fusion peptide loop region spans residues 890–907; the sequence is VYPFMWGGAQCFCDSENS. N-linked (GlcNAc...) asparagine; by host glycans are attached at residues Asn945 and Asn1051. Intrachain disulfides connect Cys1065/Cys1077, Cys1107/Cys1182, Cys1112/Cys1186, and Cys1134/Cys1176. Positions 1196–1245 form a coiled coil; sequence TPHKNDQEFQAAISKTSWSWLFALFGGASSLLIIGLMIFACSMMLTSTRR. Residues 1215–1239 form a helical membrane-spanning segment; it reads WLFALFGGASSLLIIGLMIFACSMM. The Cytoplasmic segment spans residues 1240 to 1245; it reads LTSTRR.

Belongs to the alphavirus structural polyprotein family. In terms of assembly, homomultimer. Interacts with host karyopherin KPNA4; this interaction allows the nuclear import of the viral capsid protein. Interacts with spike glycoprotein E2. Interacts with host IRAK1; the interaction leads to inhibition of IRAK1-dependent signaling. The precursor of protein E3/E2 and E1 form a heterodimer shortly after synthesis. As to quaternary structure, the precursor of protein E3/E2 and E1 form a heterodimer shortly after synthesis. Processing of the precursor of protein E3/E2 into E2 and E3 results in a heterodimer of the spike glycoproteins E2 and E1. Spike at virion surface are constituted of a trimer of E2-E1 heterodimers. After target cell attachment and endocytosis, E1 change conformation to form homotrimers. E2-E1 heterodimers interact with host VLDLR or LRP8/APOER2 to mediate viral entry. Interacts with 6K protein. In terms of assembly, interacts with spike glycoprotein E1. Processing of the precursor of protein E3/E2 into E2 and E3 results in a heterodimer of the spike glycoproteins E2 and E1. Spike at virion surface are constituted of a trimer of E2-E1 heterodimers. E2-E1 heterodimers interact with host VLDLR or LRP8/APOER2 to mediate viral entry. Interacts with 6K protein. Interacts with the capsid protein. Oligomer. Interacts with spike glycoprotein E1. Interacts with spike glycoprotein E2. In terms of processing, specific enzymatic cleavages in vivo yield mature proteins. Capsid protein is auto-cleaved during polyprotein translation, unmasking a signal peptide at the N-terminus of the precursor of E3/E2. The remaining polyprotein is then targeted to the host endoplasmic reticulum, where host signal peptidase cleaves it into pE2, 6K and E1 proteins. pE2 is further processed to mature E3 and E2 by host furin in trans-Golgi vesicle. Palmitoylated via thioester bonds. These palmitoylations may induce disruption of the C-terminus transmembrane. This would result in the reorientation of E2 C-terminus from lumenal to cytoplasmic side. Post-translationally, N-glycosylated. In terms of processing, palmitoylated via thioester bonds.

It is found in the virion. Its subcellular location is the host cytoplasm. It localises to the host cell membrane. The protein localises to the host nucleus. The protein resides in the virion membrane. It is found in the host Golgi apparatus. Its subcellular location is the host trans-Golgi network. It localises to the host endoplasmic reticulum. The enzyme catalyses Autocatalytic release of the core protein from the N-terminus of the togavirus structural polyprotein by hydrolysis of a -Trp-|-Ser- bond.. Its activity is regulated as follows. The channel activity is blocked by 5-N, N-Hexamethylene amiloride. Functionally, forms an icosahedral capsid with a T=4 symmetry composed of 240 copies of the capsid protein surrounded by a lipid membrane through which penetrate 80 spikes composed of trimers of E1-E2 heterodimers. The capsid protein binds to the viral RNA genome at a site adjacent to a ribosome binding site for viral genome translation following genome release. Possesses a protease activity that results in its autocatalytic cleavage from the nascent structural protein. Following its self-cleavage, the capsid protein transiently associates with ribosomes, and within several minutes the protein binds to viral RNA and rapidly assembles into icosahedric core particles. The resulting nucleocapsid eventually associates with the cytoplasmic domain of the spike glycoprotein E2 at the cell membrane, leading to budding and formation of mature virions. In case of infection, new virions attach to target cells and after clathrin-mediated endocytosis their membrane fuses with the host endosomal membrane. This leads to the release of the nucleocapsid into the cytoplasm, followed by an uncoating event necessary for the genomic RNA to become accessible. The uncoating might be triggered by the interaction of capsid proteins with ribosomes. Binding of ribosomes would release the genomic RNA since the same region is genomic RNA-binding and ribosome-binding. Specifically inhibits interleukin-1 receptor-associated kinase 1/IRAK1-dependent signaling during viral entry, representing a means by which the alphaviruses may evade innate immune detection and activation prior to viral gene expression. In terms of biological role, provides the signal sequence for the translocation of the precursor of protein E3/E2 to the host endoplasmic reticulum. Furin-cleaved E3 remains associated with spike glycoprotein E1 and mediates pH protection of the latter during the transport via the secretory pathway. After virion release from the host cell, the assembly protein E3 is gradually released in the extracellular space. Plays a role in viral attachment to target host cell, by binding to the cell receptors VLDLR or LRP8/APOER2. Synthesized as a pE2 precursor which is processed by furin at the cell membrane just before virion budding, giving rise to E2-E1 heterodimer. The pE2-E1 heterodimer is stable, whereas E2-E1 is unstable and dissociate at low pH. pE2 is processed at the last step, presumably to avoid E1 fusion activation before its final export to cell surface. E2 C-terminus contains a transitory transmembrane that would be disrupted by palmitoylation, resulting in reorientation of the C-terminal tail from lumenal to cytoplasmic side. This step is critical since E2 C-terminus is involved in budding by interacting with capsid proteins. This release of E2 C-terminus in cytoplasm occurs lately in protein export, and precludes premature assembly of particles at the endoplasmic reticulum membrane. Its function is as follows. Acts as a viroporin that participates in virus glycoprotein processing and transport to the plasma membrane, cell permeabilization and budding of viral particles. Disrupts the calcium homeostasis of the cell, probably at the endoplasmic reticulum level resulting in the increased levels of cytoplasmic calcium. Because of its lipophilic properties, the 6K protein is postulated to influence the selection of lipids that interact with the transmembrane domains of the glycoproteins, which, in turn, affects the deformability of the bilayer required for the extreme curvature that occurs as budding proceeds. Present in low amount in virions, about 3% compared to viral glycoproteins. Functionally, class II viral fusion protein. Fusion activity is inactive as long as E1 is bound to E2 in mature virion. After virus attachment to target cell via host VLDLR or LRP8/APOER2 and endocytosis, acidification of the endosome induces dissociation of E1/E2 heterodimer and concomitant trimerization of the E1 subunits. This E1 trimer is fusion active, and promotes release of viral nucleocapsid in cytoplasm after endosome and viral membrane fusion. Efficient fusion requires the presence of cholesterol and sphingolipid in the target membrane. This chain is Structural polyprotein, found in Acrocephalus scirpaceus (Eurasian reed-warbler).